The sequence spans 503 residues: Probable cytosol aminopeptidase (503 aa).

Residues Lys270 and Asp275 each coordinate Mn(2+). Lys282 is a catalytic residue. Mn(2+)-binding residues include Asp293, Asp352, and Glu354. The active site involves Arg356.

Belongs to the peptidase M17 family. The cofactor is Mn(2+).

It localises to the cytoplasm. It carries out the reaction Release of an N-terminal amino acid, Xaa-|-Yaa-, in which Xaa is preferably Leu, but may be other amino acids including Pro although not Arg or Lys, and Yaa may be Pro. Amino acid amides and methyl esters are also readily hydrolyzed, but rates on arylamides are exceedingly low.. The catalysed reaction is Release of an N-terminal amino acid, preferentially leucine, but not glutamic or aspartic acids.. Its function is as follows. Presumably involved in the processing and regular turnover of intracellular proteins. Catalyzes the removal of unsubstituted N-terminal amino acids from various peptides. The sequence is that of Probable cytosol aminopeptidase from Citrobacter koseri (strain ATCC BAA-895 / CDC 4225-83 / SGSC4696).